We begin with the raw amino-acid sequence, 268 residues long: Ribonuclease P protein subunit p30 (268 aa).

An N-acetylalanine modification is found at alanine 2. Position 251 is a phosphoserine (serine 251).

It belongs to the eukaryotic/archaeal RNase P protein component 3 family. Component of nuclear RNase P and RNase MRP ribonucleoproteins. RNase P consists of a catalytic RNA moiety and about 10 protein subunits; POP1, POP4, POP5, POP7, RPP14, RPP21, RPP25, RPP30, RPP38 and RPP40. Within the RNase P complex, POP1, POP7 and RPP25 form the 'finger' subcomplex, POP5, RPP14, RPP40 and homodimeric RPP30 form the 'palm' subcomplex, and RPP21, POP4 and RPP38 form the 'wrist' subcomplex. All subunits of the RNase P complex interact with the catalytic RNA. Several subunits of RNase P are also part of the RNase MRP complex. RNase MRP consists of a catalytic RNA moiety and about 8 protein subunits; POP1, POP7, RPP25, RPP30, RPP38, RPP40 and possibly also POP4 and POP5.

Its subcellular location is the nucleus. The protein localises to the nucleolus. In terms of biological role, component of ribonuclease P, a ribonucleoprotein complex that generates mature tRNA molecules by cleaving their 5'-ends. Also a component of the MRP ribonuclease complex, which cleaves pre-rRNA sequences. The polypeptide is Ribonuclease P protein subunit p30 (RPP30) (Bos taurus (Bovine)).